The primary structure comprises 148 residues: uncharacterized protein (148 aa).

Positions 1–16 (MDVLFIALLVAPLILG) are cleaved as a signal peptide. N-linked (GlcNAc...) asparagine glycosylation is present at N50. Positions 91 to 125 (MDPQNPVTTKPVTTEPVTTEPVTTEPQSPNQNDAM) are disordered. Low complexity predominate over residues 96–116 (PVTTKPVTTEPVTTEPVTTEP).

It localises to the secreted. This is an uncharacterized protein from Mus musculus (Mouse).